We begin with the raw amino-acid sequence, 250 residues long: 5'-nucleotidase SurE (250 aa).

4 residues coordinate a divalent metal cation: aspartate 8, aspartate 9, serine 40, and asparagine 92.

This sequence belongs to the SurE nucleotidase family. A divalent metal cation serves as cofactor.

The protein resides in the cytoplasm. It carries out the reaction a ribonucleoside 5'-phosphate + H2O = a ribonucleoside + phosphate. Functionally, nucleotidase that shows phosphatase activity on nucleoside 5'-monophosphates. This Dichelobacter nodosus (strain VCS1703A) protein is 5'-nucleotidase SurE.